The primary structure comprises 872 residues: Alanine--tRNA ligase (872 aa).

Residues His-567, His-571, Cys-669, and His-673 each contribute to the Zn(2+) site.

It belongs to the class-II aminoacyl-tRNA synthetase family. The cofactor is Zn(2+).

It localises to the cytoplasm. The catalysed reaction is tRNA(Ala) + L-alanine + ATP = L-alanyl-tRNA(Ala) + AMP + diphosphate. Functionally, catalyzes the attachment of alanine to tRNA(Ala) in a two-step reaction: alanine is first activated by ATP to form Ala-AMP and then transferred to the acceptor end of tRNA(Ala). Also edits incorrectly charged Ser-tRNA(Ala) and Gly-tRNA(Ala) via its editing domain. The sequence is that of Alanine--tRNA ligase from Streptococcus agalactiae serotype Ia (strain ATCC 27591 / A909 / CDC SS700).